The sequence spans 712 residues: Rap1 GTPase-activating protein 2 (712 aa).

The tract at residues 1-33 is disordered; it reads MLAGLKVKKQELANSSDVTLPDRPLSPPLTAPP. S26 bears the Phosphoserine mark. Phosphothreonine is present on T30. The Rap-GAP domain occupies 229–445; sequence IVSYDEHDVN…RTRAALLDNL (217 aa). Residues S488, S495, S525, S539, S545, S593, and S594 each carry the phosphoserine modification. Positions 529–712 are disordered; it reads AAATAKNQSR…LSHASSSAGH (184 aa). A compositionally biased stretch (polar residues) spans 566-594; the sequence is DSASSTPKTPDGGHSSQEIKSETSSNPSS. Residues 599-612 show a composition bias toward basic and acidic residues; that stretch reads PNKEKPFIKLKENG. Residues 617 to 629 show a composition bias toward low complexity; sequence SRSSSSTSSFSST. The span at 641-652 shows a compositional bias: polar residues; the sequence is SGSSQPSTTSPF. Residues 660–669 are compositionally biased toward low complexity; sequence SPSPSSESPS. Residues 681–694 are compositionally biased toward polar residues; that stretch reads RSPTDAKSRNSPRS.

The protein resides in the cytoplasm. Its function is as follows. GTPase activator for the nuclear Ras-related regulatory protein RAP-1A (KREV-1), converting it to the putatively inactive GDP-bound state. This chain is Rap1 GTPase-activating protein 2 (Rap1gap2), found in Mus musculus (Mouse).